The primary structure comprises 462 residues: RuvB-like 2 (462 aa).

An ATP-binding site is contributed by 76 to 83 (GQPGTGKT).

Belongs to the RuvB family. As to quaternary structure, forms homohexameric rings. Can form a dodecamer with ruvbl2 made of two stacked hexameric rings. Is a component of the RNA polymerase II holoenzyme complex. Component of the chromatin-remodeling Ino80 complex. Component of some MLL1/MLL complex.

It is found in the nucleus. Its subcellular location is the dynein axonemal particle. The catalysed reaction is ATP + H2O = ADP + phosphate + H(+). Functionally, has single-stranded DNA-stimulated ATPase and ATP-dependent DNA helicase (5' to 3') activity suggesting a role in nuclear processes such as recombination and transcription. Proposed core component of the chromatin remodeling INO80 complex which exhibits DNA- and nucleosome-activated ATPase activity and catalyzes ATP-dependent nucleosome sliding. Involved in the endoplasmic reticulum (ER)-associated degradation (ERAD) pathway where it negatively regulates expression of ER stress response genes. This Xenopus laevis (African clawed frog) protein is RuvB-like 2 (ruvbl2).